A 326-amino-acid chain; its full sequence is Homeobox protein Hox-A1 (326 aa).

An Antp-type hexapeptide motif is present at residues 196-201 (TFDWMK). Residues 221-280 (PNTVRTNFTTKQLTELEKEFHFNKYLTRARRVEIAAALQLNETQVKIWFQNRRMKQKKRE) constitute a DNA-binding region (homeobox). Residues 273-326 (RMKQKKREKEGLTSASPATPGSEANTEDTSDKCNSTSSTPSPSSSTSETINTSG) form a disordered region. Over residues 285–296 (TSASPATPGSEA) the composition is skewed to polar residues. A compositionally biased stretch (low complexity) spans 306–326 (NSTSSTPSPSSSTSETINTSG).

The protein belongs to the Antp homeobox family. Labial subfamily.

Its subcellular location is the nucleus. In terms of biological role, sequence-specific transcription factor. Part of a developmental regulatory system that provides cells with specific positional identities on the anterior-posterior axis. Acts on the anterior body structures. Seems to act in the maintenance and/or generation of hindbrain segments. This is Homeobox protein Hox-A1 (HOXA1) from Heterodontus francisci (Horn shark).